Consider the following 469-residue polypeptide: 3-isopropylmalate dehydratase large subunit (469 aa).

The [4Fe-4S] cluster site is built by Cys347, Cys407, and Cys410.

Belongs to the aconitase/IPM isomerase family. LeuC type 1 subfamily. In terms of assembly, heterodimer of LeuC and LeuD. The cofactor is [4Fe-4S] cluster.

It carries out the reaction (2R,3S)-3-isopropylmalate = (2S)-2-isopropylmalate. Its pathway is amino-acid biosynthesis; L-leucine biosynthesis; L-leucine from 3-methyl-2-oxobutanoate: step 2/4. Functionally, catalyzes the isomerization between 2-isopropylmalate and 3-isopropylmalate, via the formation of 2-isopropylmaleate. The protein is 3-isopropylmalate dehydratase large subunit of Prochlorococcus marinus (strain NATL2A).